Here is a 119-residue protein sequence, read N- to C-terminus: MLLKSTTRHVRIYTAEIQKNELIPSETVLTLDVDPDNEFVWPEESLQKVYRQFDALVESNSGEDLTEYNLRRIGSDLEAFIRDLLQKGELRYNLDSRVMNFSMGLPQMDHPDSQGAYLQ.

The protein belongs to the complex I NdhM subunit family. NDH-1 can be composed of about 15 different subunits; different subcomplexes with different compositions have been identified which probably have different functions.

It is found in the cellular thylakoid membrane. The enzyme catalyses a plastoquinone + NADH + (n+1) H(+)(in) = a plastoquinol + NAD(+) + n H(+)(out). The catalysed reaction is a plastoquinone + NADPH + (n+1) H(+)(in) = a plastoquinol + NADP(+) + n H(+)(out). In terms of biological role, NDH-1 shuttles electrons from an unknown electron donor, via FMN and iron-sulfur (Fe-S) centers, to quinones in the respiratory and/or the photosynthetic chain. The immediate electron acceptor for the enzyme in this species is believed to be plastoquinone. Couples the redox reaction to proton translocation, and thus conserves the redox energy in a proton gradient. Cyanobacterial NDH-1 also plays a role in inorganic carbon-concentration. The polypeptide is NAD(P)H-quinone oxidoreductase subunit M (Picosynechococcus sp. (strain ATCC 27264 / PCC 7002 / PR-6) (Agmenellum quadruplicatum)).